A 698-amino-acid chain; its full sequence is Ubiquitin-like modifier-activating enzyme ATG7 (698 aa).

An FAP motif motif is present at residues 11-13 (FAP). Lysine 41 is covalently cross-linked (Glycyl lysine isopeptide (Lys-Gly) (interchain with G-Cter in ubiquitin)). The active-site Glycyl thioester intermediate is the cysteine 567. Position 693 is a phosphoserine (serine 693).

The protein belongs to the ATG7 family. Homodimer. Interacts with ATG3; this interaction is essential for the transfer of ATG8-like proteins's thioester from ATG7 to ATG3 and plays a role in the conjugation of ATG12 to ATG5. Interacts with ATG12. Interacts with ATG10. Forms intermediate conjugates with GABARAPL1. Forms intermediate conjugates with ATG8-like proteins such as GABARAP, GABARAPL2 or MAP1LC3A. Interacts with EP300 acetyltransferase. Interacts with FOXO1. In terms of processing, acetylated by EP300. Polyubiquitinated on Lys-41 via 'Lys-63'-linked ubiquitin by TRIM32; this modification positiely regulates ATG8 and ATG12 activating enzyme activity leading to initiation of autophagy under metabolic stress. Widely expressed, especially in kidney, liver, lymph nodes and bone marrow.

Its subcellular location is the cytoplasm. The protein localises to the preautophagosomal structure. In terms of biological role, E1-like activating enzyme involved in the 2 ubiquitin-like systems required for cytoplasm to vacuole transport (Cvt) and autophagy. Activates ATG12 for its conjugation with ATG5 as well as the ATG8 family proteins for their conjugation with phosphatidylethanolamine. Both systems are needed for the ATG8 association to Cvt vesicles and autophagosomes membranes. Facilitates LC3-I lipidation with phosphatidylethanolamine to form LC3-II which is found on autophagosomal membranes. Required for autophagic death induced by caspase-8 inhibition. Required for mitophagy which contributes to regulate mitochondrial quantity and quality by eliminating the mitochondria to a basal level to fulfill cellular energy requirements and preventing excess ROS production. Modulates p53/TP53 activity to regulate cell cycle and survival during metabolic stress. Also plays a key role in the maintenance of axonal homeostasis, the prevention of axonal degeneration, the maintenance of hematopoietic stem cells, the formation of Paneth cell granules, as well as in adipose differentiation. Plays a role in regulating the liver clock and glucose metabolism by mediating the autophagic degradation of CRY1 (clock repressor) in a time-dependent manner. This Mus musculus (Mouse) protein is Ubiquitin-like modifier-activating enzyme ATG7.